The primary structure comprises 278 residues: Shikimate dehydrogenase (NADP(+)) (278 aa).

Shikimate is bound by residues 19–21 (SRS) and T66. K70 acts as the Proton acceptor in catalysis. D82 is an NADP(+) binding site. Residues N91 and D107 each coordinate shikimate. NADP(+)-binding positions include 133–137 (GAGGA), 157–162 (NRTRAK), and I222. A shikimate-binding site is contributed by Y224. Residue G245 participates in NADP(+) binding.

The protein belongs to the shikimate dehydrogenase family. In terms of assembly, homodimer.

It catalyses the reaction shikimate + NADP(+) = 3-dehydroshikimate + NADPH + H(+). It functions in the pathway metabolic intermediate biosynthesis; chorismate biosynthesis; chorismate from D-erythrose 4-phosphate and phosphoenolpyruvate: step 4/7. Involved in the biosynthesis of the chorismate, which leads to the biosynthesis of aromatic amino acids. Catalyzes the reversible NADPH linked reduction of 3-dehydroshikimate (DHSA) to yield shikimate (SA). This chain is Shikimate dehydrogenase (NADP(+)), found in Dinoroseobacter shibae (strain DSM 16493 / NCIMB 14021 / DFL 12).